A 238-amino-acid chain; its full sequence is Zinc-finger homeodomain protein 11 (238 aa).

A ZF-HD dimerization-type; degenerate zinc finger spans residues 12-59; the sequence is YRECMRNHAAKLGTYANDGCCEYTPDDGHPAGLLCAACGCHRNFHRKD. Positions 119 to 188 form a DNA-binding region, homeobox; that stretch reads RRRTRTKFTE…NHKAGGGGGG (70 aa). A compositionally biased stretch (gly residues) spans 183-200; it reads GGGGGGGGSGGPGAGGGA. A disordered region spans residues 183–238; it reads GGGGGGGGSGGPGAGGGAQTSSSTTRGGGDVGVGLSPAMGGDGEDDEEVRGSEMCM.

Homo- and heterodimer with other ZFHD proteins.

Its subcellular location is the nucleus. In terms of biological role, putative transcription factor. The protein is Zinc-finger homeodomain protein 11 (ZHD11) of Oryza sativa subsp. indica (Rice).